Consider the following 700-residue polypeptide: Polyribonucleotide nucleotidyltransferase (700 aa).

Residues D491 and D497 each contribute to the Mg(2+) site. One can recognise a KH domain in the interval 558–617 (PNYAVIEINPDKIRDVIGKGGATIRQLTEETGAVIDIDDAGTIRIFGENKAATKAAIAKI). An S1 motif domain is found at 627–695 (GKTYEGTVAR…NRGRIKLTMK (69 aa)).

It belongs to the polyribonucleotide nucleotidyltransferase family. As to quaternary structure, component of the RNA degradosome, which is a multiprotein complex involved in RNA processing and mRNA degradation. Mg(2+) is required as a cofactor.

It is found in the cytoplasm. The catalysed reaction is RNA(n+1) + phosphate = RNA(n) + a ribonucleoside 5'-diphosphate. Its function is as follows. Involved in mRNA degradation. Catalyzes the phosphorolysis of single-stranded polyribonucleotides processively in the 3'- to 5'-direction. The polypeptide is Polyribonucleotide nucleotidyltransferase (Psychrobacter arcticus (strain DSM 17307 / VKM B-2377 / 273-4)).